Consider the following 113-residue polypeptide: Cytochrome c2 (113 aa).

4 residues coordinate heme c: Cys-15, Cys-18, His-19, and Met-92.

It belongs to the cytochrome c family. Binds 1 heme c group covalently per subunit.

In terms of biological role, cytochrome c2 is found mainly in purple, non-sulfur, photosynthetic bacteria where it functions as the electron donor to the oxidized bacteriochlorophyll in the photophosphorylation pathway. However, it may also have a role in the respiratory chain and is found in some non-photosynthetic bacteria. The protein is Cytochrome c2 of Pararhodospirillum photometricum (Rhodospirillum photometricum).